The chain runs to 299 residues: Taste receptor type 2 member 50 (299 aa).

A topological domain (extracellular) is located at residue Met-1. The helical transmembrane segment at 2-22 (VTFLHIFFSILILVLFVLGNF) threads the bilayer. The Cytoplasmic segment spans residues 23–55 (ANGFIALVNFIDLVKRKKISSADQILTALAVSR). The helical transmembrane segment at 56–76 (IGLLWALLLNWYLTVLNPAFY) threads the bilayer. At 77 to 87 (SVELRITSYNA) the chain is on the extracellular side. A helical transmembrane segment spans residues 88-108 (WVVTNHFSMWLAASLSIFYLL). The Cytoplasmic portion of the chain corresponds to 109 to 126 (KIANFSNLIFLHLKRRVR). The helical transmembrane segment at 127 to 147 (SVILVILLGPLTFLVCHLFVA) threads the bilayer. Residues 148–181 (NMDESMSAEEYEGNMTGKLKLRNTVHLSYLTVTT) are Extracellular-facing. N-linked (GlcNAc...) asparagine glycosylation occurs at Asn-161. The helical transmembrane segment at 182 to 202 (LWSFIPFTLSLISFLMLICSL) threads the bilayer. Over 203–229 (CKHVKKMQLHGEGSQDLSTKVHIKALQ) the chain is Cytoplasmic. The chain crosses the membrane as a helical span at residues 230–250 (TLISFLLLCAIFFLFLIISIW). Over 251 to 259 (NPRRLQNDP) the chain is Extracellular. The helical transmembrane segment at 260 to 280 (VVVVSKAVGNIYLALDSFILI) threads the bilayer. The Cytoplasmic portion of the chain corresponds to 281 to 299 (WRTKKLKHTFLLILCQIRC).

Belongs to the G-protein coupled receptor T2R family.

It is found in the membrane. Functionally, receptor that may play a role in the perception of bitterness and is gustducin-linked. May play a role in sensing the chemical composition of the gastrointestinal content. The activity of this receptor may stimulate alpha gustducin, mediate PLC-beta-2 activation and lead to the gating of TRPM5. This chain is Taste receptor type 2 member 50 (TAS2R50), found in Pongo pygmaeus (Bornean orangutan).